A 428-amino-acid polypeptide reads, in one-letter code: MAKEKPHVNIVFIGHVDHGKSTTIGRLLFDTANIPENIIKKFEEMGEKGKSFKFAWVMDRLKEERERGITIDVAHTKFETPHRYITIIDAPGHRDFVKNMITGASQADAAVLVVAATDGVMPQTKEHAFLARTLGINHIIVAINKMDMVNYDEKKFKQVAEQVKKLLQMLGYKDFPIIPISAWEGDNVVKKSDKMPWYNGPTLLEALDQIPEPPKPVDKPLRIPIQDVYSIKGVGTVPVGRVETGVLRVGDVVIFEPASTIFHKPIQGEVKSIEMHHEPLQEAYPGDNIGFNVRGVGKNDIKRGDVAGHTTNPPTVVRPKDTFKAQIIVLNHPTAITVGYTPVLHAHTTQVAVRFEQLLAKLDPRTGNIVEENPQFIKTGDSAIVILRPTKAMVIEPVKEIPQMGRFAIRDMGQTVAAGMVISIQKAD.

Residues 5 to 215 (KPHVNIVFIG…ALDQIPEPPK (211 aa)) form the tr-type G domain. The interval 14–21 (GHVDHGKS) is G1. 14 to 21 (GHVDHGKS) contacts GTP. S21 is a Mg(2+) binding site. The interval 68-72 (GITID) is G2. The interval 89–92 (DAPG) is G3. GTP is bound by residues 89–93 (DAPGH) and 144–147 (NKMD). A G4 region spans residues 144–147 (NKMD). Residues 181 to 183 (SAW) are G5.

It belongs to the TRAFAC class translation factor GTPase superfamily. Classic translation factor GTPase family. EF-Tu/EF-1A subfamily.

Its subcellular location is the cytoplasm. The catalysed reaction is GTP + H2O = GDP + phosphate + H(+). GTP hydrolase that promotes the GTP-dependent binding of aminoacyl-tRNA to the A-site of ribosomes during protein biosynthesis. This is Elongation factor 1-alpha from Thermococcus kodakarensis (strain ATCC BAA-918 / JCM 12380 / KOD1) (Pyrococcus kodakaraensis (strain KOD1)).